The chain runs to 360 residues: 3-dehydroquinate synthase (360 aa).

NAD(+)-binding positions include 71 to 76 (DGEQYK), 105 to 109 (GVVGD), 129 to 130 (TT), K142, K151, and 169 to 172 (TLNT). The Zn(2+) site is built by E184, H248, and H265.

Belongs to the sugar phosphate cyclases superfamily. Dehydroquinate synthase family. It depends on Co(2+) as a cofactor. Zn(2+) is required as a cofactor. Requires NAD(+) as cofactor.

It localises to the cytoplasm. It catalyses the reaction 7-phospho-2-dehydro-3-deoxy-D-arabino-heptonate = 3-dehydroquinate + phosphate. It functions in the pathway metabolic intermediate biosynthesis; chorismate biosynthesis; chorismate from D-erythrose 4-phosphate and phosphoenolpyruvate: step 2/7. Catalyzes the conversion of 3-deoxy-D-arabino-heptulosonate 7-phosphate (DAHP) to dehydroquinate (DHQ). This is 3-dehydroquinate synthase from Coxiella burnetii (strain CbuK_Q154) (Coxiella burnetii (strain Q154)).